The following is a 394-amino-acid chain: 3-hydroxybenzoate 6-hydroxylase 1 (394 aa).

Belongs to the 3-hydroxybenzoate 6-hydroxylase family. As to quaternary structure, homotrimer. FAD serves as cofactor.

It carries out the reaction 3-hydroxybenzoate + NADH + O2 + H(+) = 2,5-dihydroxybenzoate + NAD(+) + H2O. Its activity is regulated as follows. Inhibited by manganese, copper, mercury, and iron ions. Catalyzes the NAD- or NADP-dependent conversion of 3-hydroxybenzoate to gentisate. The affinity of the enzyme toward NAD is twice as high as for NADP. The enzyme shows higher specific activities against the intermediates in the degradation of 2,5-xylenol and 3,5-xylenol, 3-hydroxy-4-methylbenzoate and 3-hydroxy-5-methylbenzoate, respectively, than for 3-hydroxybenzoate. It also shows activity against 3-substituted benzoates. The polypeptide is 3-hydroxybenzoate 6-hydroxylase 1 (xlnD) (Aquipseudomonas alcaligenes (Pseudomonas alcaligenes)).